The following is a 287-amino-acid chain: Anthocyanidin 3-O-glucosyltransferase 7 (287 aa).

Ala-162, Gln-164, His-179, Trp-182, Asn-183, Ser-184, and Glu-187 together coordinate UDP-alpha-D-glucose. An anthocyanidin is bound at residue Gly-202. UDP-alpha-D-glucose-binding residues include Asp-203 and Gln-204.

This sequence belongs to the UDP-glycosyltransferase family. In terms of tissue distribution, expressed in cotyledons, hypocotyls, roots and leaves.

The catalysed reaction is an anthocyanidin + UDP-alpha-D-glucose + H(+) = an anthocyanidin 3-O-beta-D-glucoside + UDP. It functions in the pathway pigment biosynthesis; anthocyanin biosynthesis. Functionally, in the presence of other necessary color factors, this glycosylation reaction allows the accumulation of anthocyanin pigments. The sequence is that of Anthocyanidin 3-O-glucosyltransferase 7 (GT7) from Manihot esculenta (Cassava).